Here is a 209-residue protein sequence, read N- to C-terminus: Uracil phosphoribosyltransferase (209 aa).

Residues Arg-79, Arg-104, and Asp-131–Ser-139 contribute to the 5-phospho-alpha-D-ribose 1-diphosphate site. Residues Ile-194 and Gly-199 to Ala-201 contribute to the uracil site. Asp-200 contributes to the 5-phospho-alpha-D-ribose 1-diphosphate binding site.

It belongs to the UPRTase family. Mg(2+) serves as cofactor.

It carries out the reaction UMP + diphosphate = 5-phospho-alpha-D-ribose 1-diphosphate + uracil. It functions in the pathway pyrimidine metabolism; UMP biosynthesis via salvage pathway; UMP from uracil: step 1/1. With respect to regulation, allosterically activated by GTP. Its function is as follows. Catalyzes the conversion of uracil and 5-phospho-alpha-D-ribose 1-diphosphate (PRPP) to UMP and diphosphate. The protein is Uracil phosphoribosyltransferase of Streptococcus pyogenes serotype M1.